A 439-amino-acid chain; its full sequence is Ribosomal protein uS12 methylthiotransferase RimO (439 aa).

Positions 3–118 (KKFYITTLGC…AGKILREKFP (116 aa)) constitute an MTTase N-terminal domain. 6 residues coordinate [4Fe-4S] cluster: Cys-12, Cys-48, Cys-81, Cys-157, Cys-161, and Cys-164. In terms of domain architecture, Radical SAM core spans 143–370 (NYSKPYAYVK…RDVHLAILEE (228 aa)). The region spanning 373–438 (ESRIGQTYDA…EYDMNGTWIS (66 aa)) is the TRAM domain.

It belongs to the methylthiotransferase family. RimO subfamily. Requires [4Fe-4S] cluster as cofactor.

It is found in the cytoplasm. It catalyses the reaction L-aspartate(89)-[ribosomal protein uS12]-hydrogen + (sulfur carrier)-SH + AH2 + 2 S-adenosyl-L-methionine = 3-methylsulfanyl-L-aspartate(89)-[ribosomal protein uS12]-hydrogen + (sulfur carrier)-H + 5'-deoxyadenosine + L-methionine + A + S-adenosyl-L-homocysteine + 2 H(+). Catalyzes the methylthiolation of an aspartic acid residue of ribosomal protein uS12. The sequence is that of Ribosomal protein uS12 methylthiotransferase RimO from Leptospira borgpetersenii serovar Hardjo-bovis (strain L550).